The chain runs to 248 residues: Ribonuclease PH (248 aa).

Phosphate-binding positions include arginine 86 and 124-126; that span reads GTR.

Belongs to the RNase PH family. As to quaternary structure, homohexameric ring arranged as a trimer of dimers.

It carries out the reaction tRNA(n+1) + phosphate = tRNA(n) + a ribonucleoside 5'-diphosphate. Its function is as follows. Phosphorolytic 3'-5' exoribonuclease that plays an important role in tRNA 3'-end maturation. Removes nucleotide residues following the 3'-CCA terminus of tRNAs; can also add nucleotides to the ends of RNA molecules by using nucleoside diphosphates as substrates, but this may not be physiologically important. Probably plays a role in initiation of 16S rRNA degradation (leading to ribosome degradation) during starvation. The chain is Ribonuclease PH from Clostridium perfringens (strain ATCC 13124 / DSM 756 / JCM 1290 / NCIMB 6125 / NCTC 8237 / Type A).